Here is a 149-residue protein sequence, read N- to C-terminus: UPF0208 membrane protein PBPRA2797 (149 aa).

A run of 2 helical transmembrane segments spans residues 41–60 (FATR…QMAF) and 65–87 (ALPQ…LWWL).

This sequence belongs to the UPF0208 family.

It localises to the cell inner membrane. This Photobacterium profundum (strain SS9) protein is UPF0208 membrane protein PBPRA2797.